The sequence spans 154 residues: Nucleoside diphosphate kinase A1 (154 aa).

Lysine 13, phenylalanine 61, arginine 89, threonine 95, arginine 106, and asparagine 116 together coordinate ATP. Histidine 119 serves as the catalytic Pros-phosphohistidine intermediate.

The protein belongs to the NDK family. It depends on Mg(2+) as a cofactor.

The protein resides in the cytoplasm. The catalysed reaction is a 2'-deoxyribonucleoside 5'-diphosphate + ATP = a 2'-deoxyribonucleoside 5'-triphosphate + ADP. It carries out the reaction a ribonucleoside 5'-diphosphate + ATP = a ribonucleoside 5'-triphosphate + ADP. Its function is as follows. Major role in the synthesis of nucleoside triphosphates other than ATP. The ATP gamma phosphate is transferred to the NDP beta phosphate via a ping-pong mechanism, using a phosphorylated active-site intermediate. The protein is Nucleoside diphosphate kinase A1 of Xenopus laevis (African clawed frog).